The following is a 236-amino-acid chain: Sugar fermentation stimulation protein homolog (236 aa).

It belongs to the SfsA family.

The protein is Sugar fermentation stimulation protein homolog of Paramagnetospirillum magneticum (strain ATCC 700264 / AMB-1) (Magnetospirillum magneticum).